Consider the following 153-residue polypeptide: Superoxide dismutase [Cu-Zn] (153 aa).

Cu cation contacts are provided by His-45, His-47, and His-62. An intrachain disulfide couples Cys-56 to Cys-145. Residues His-62, His-70, His-79, and Asp-82 each contribute to the Zn(2+) site. A Cu cation-binding site is contributed by His-119.

The protein belongs to the Cu-Zn superoxide dismutase family. As to quaternary structure, homodimer. It depends on Cu cation as a cofactor. Requires Zn(2+) as cofactor.

The protein localises to the cytoplasm. It catalyses the reaction 2 superoxide + 2 H(+) = H2O2 + O2. Its function is as follows. Destroys radicals which are normally produced within the cells and which are toxic to biological systems. This chain is Superoxide dismutase [Cu-Zn], found in Drosophila willistoni (Fruit fly).